The following is a 116-amino-acid chain: MNLITTIITITITLSAVLATVSFWLPQISPDAEKLSPYECGFDPLGSARLPFSLRFFLIAILFLLFDLEIALLLPLPWGDQLNTPTLTLVWSTAVLALLTLGLIYEWTQGGLEWAE.

The next 3 membrane-spanning stretches (helical) occupy residues 3-23 (LITT…TVSF), 56-76 (FFLI…LLPL), and 87-107 (LTLV…IYEW).

This sequence belongs to the complex I subunit 3 family.

Its subcellular location is the mitochondrion membrane. It carries out the reaction a ubiquinone + NADH + 5 H(+)(in) = a ubiquinol + NAD(+) + 4 H(+)(out). Functionally, core subunit of the mitochondrial membrane respiratory chain NADH dehydrogenase (Complex I) that is believed to belong to the minimal assembly required for catalysis. Complex I functions in the transfer of electrons from NADH to the respiratory chain. The immediate electron acceptor for the enzyme is believed to be ubiquinone. This Oncorhynchus kisutch (Coho salmon) protein is NADH-ubiquinone oxidoreductase chain 3 (MT-ND3).